We begin with the raw amino-acid sequence, 309 residues long: Large ribosomal subunit protein mL45 (309 aa).

This sequence belongs to the mitochondrion-specific ribosomal protein mL45 family. Component of the mitochondrial ribosome large subunit (39S) which comprises a 16S rRNA and about 50 distinct proteins.

It is found in the mitochondrion. Functionally, component of the mitochondrial large ribosomal subunit (mt-LSU). Within the mitochondrial ribosomes, required to direct the nascent polypeptide toward the tunnel exit and position the exit at a distance from the membrane surface. This chain is Large ribosomal subunit protein mL45 (mrpl45), found in Xenopus laevis (African clawed frog).